A 409-amino-acid chain; its full sequence is Peptidase T (409 aa).

Histidine 78 is a binding site for Zn(2+). Residue aspartate 80 is part of the active site. Aspartate 140 contacts Zn(2+). Glutamate 173 (proton acceptor) is an active-site residue. 3 residues coordinate Zn(2+): glutamate 174, aspartate 196, and histidine 379.

The protein belongs to the peptidase M20B family. The cofactor is Zn(2+).

It localises to the cytoplasm. It carries out the reaction Release of the N-terminal residue from a tripeptide.. In terms of biological role, cleaves the N-terminal amino acid of tripeptides. This Serratia proteamaculans (strain 568) protein is Peptidase T.